A 403-amino-acid chain; its full sequence is Eukaryotic translation initiation factor 3 subunit H (403 aa).

An MPN domain is found at 57–206; it reads VRLDGLALTK…VKAYRLSPSF (150 aa). The segment at 99–122 is disordered; sequence ALPNPGRSNSERDEEEDRSSRNAT.

Belongs to the eIF-3 subunit H family. In terms of assembly, component of the eukaryotic translation initiation factor 3 (eIF-3) complex.

It localises to the cytoplasm. Its function is as follows. Component of the eukaryotic translation initiation factor 3 (eIF-3) complex, which is involved in protein synthesis of a specialized repertoire of mRNAs and, together with other initiation factors, stimulates binding of mRNA and methionyl-tRNAi to the 40S ribosome. The eIF-3 complex specifically targets and initiates translation of a subset of mRNAs involved in cell proliferation. This Mycosarcoma maydis (Corn smut fungus) protein is Eukaryotic translation initiation factor 3 subunit H.